The chain runs to 570 residues: MANSKEVKSFLWTQALRRELGQYCSTVKSSIIKDAQSLLHSLDFSEVSNIQRLMRKDKRNDSDLKRLRDLNQAVFNLVELKSTQQKNVLRVGKLTSDDLLVLAADLDRLKNKVMRTERPQTLGVYMGNLTNQQLDQRKRLLDMIGISNARNAPRPGADGVVRVWDVKDSSLLNNQFGTMPSLTLACMSKQGQYELNDVVQSLTDLGLVYAAKYPNAMDLEKLTQAHPVLSIIDVSKSSINVSGYNFSLSAAVKAGACMLDGGNMLETLKVTPQNLEDILASMLKVKRAHSMFVSDTPGDRNPYENLLYKVCLSGNGWPYIACRTSLTGRAWDNTVVDLGPPIDLSQNKQMSPAKPKGAGHGMPSGLTMSQILALKDLMAAVDPNAKTWIDIEGRAEDPVEIAFYQPQTGAYIHFYREPTDAKQFKQDSKYSHGIDIGDLFNVQPGLTSAVLELLPPNMVLTCQGSEDIRRLLDSQGRKDIKLIDVLMSKSEARKFEDEVWDKFGFLCKIHTGHVVEKKKRGNKEEITPHCALLDCLMYEAASTGRFSPGSIRAVLPRDMVFRAVTEKVAL.

Residues 54–241 (MRKDKRNDSD…IDVSKSSINV (188 aa)) are binding site for the cap structure m7GTP. Residues 342 to 361 (IDLSQNKQMSPAKPKGAGHG) form a disordered region. The Mn(2+) site is built by D390 and E392. 4 residues coordinate Zn(2+): E400, C507, H510, and C530. D534 provides a ligand contact to Mn(2+).

The protein belongs to the arenaviridae nucleocapsid protein family. Homomultimerizes to form the nucleocapsid. Binds to viral genomic RNA. Interacts with glycoprotein G2. Interacts with protein Z; this interaction probably directs the encapsidated genome to budding sites. Interacts with protein L; this interaction does not interfere with Z-L interaction. Interacts with host IKBKE (via Protein kinase domain); the interaction inhibits IKBKE kinase activity.

The protein resides in the virion. Its subcellular location is the host cytoplasm. Its function is as follows. Encapsidates the genome, protecting it from nucleases. The encapsidated genomic RNA is termed the nucleocapsid (NC). Serves as template for viral transcription and replication. The increased presence of protein N in host cell does not seem to trigger the switch from transcription to replication as observed in other negative strain RNA viruses. Through the interaction with host IKBKE, strongly inhibits the phosphorylation and nuclear translocation of host IRF3, a protein involved in interferon activation pathway, leading to the inhibition of interferon-beta and IRF3-dependent promoters activation. Also encodes a functional 3'-5' exoribonuclease that degrades preferentially dsRNA substrates and thereby participates in the suppression of interferon induction. The polypeptide is Nucleoprotein (Praomys (African soft-furred rats)).